The following is a 332-amino-acid chain: D-glutamate N-acetyltransferase (332 aa).

Belongs to the N-acetyltransferase DgcN family.

It catalyses the reaction D-glutamate + acetyl-CoA = N-acetyl-D-glutamate + CoA + H(+). The catalysed reaction is D-aspartate + acetyl-CoA = N-acetyl-D-aspartate + CoA + H(+). The enzyme catalyses D-glutamine + acetyl-CoA = N-acetyl-D-glutamine + CoA + H(+). Its pathway is amino-acid degradation. Functionally, N-acetyltransferase involved in a deamination-independent D-glutamate degradation pathway, named the DgcN-DgcA pathway. Catalyzes the transfer of the acetyl moiety from acetyl-CoA to D-glutamate to generate N-acetyl-D-glutamate. Can also acetylate D-aspartate and D-glutamine, with lower efficiency. Has low activity with D-asparagine. Cannot use succinyl-CoA. The chain is D-glutamate N-acetyltransferase from Pseudoalteromonas sp.